Here is a 375-residue protein sequence, read N- to C-terminus: MSDQQTCVIDNGSGVVKAGFAGEDAPRAVFPSIVGRPKNVSALIGVDSASEYLGDEAQQKRGVLKIFYPIEHGIVKDWDDMEKIWNHTFYVELRVQPDEHPILLTEAPLNPKTNREKMTQIMFETFNVPALYVVIQAVLSLYSAGSTTGIVCDAGDGVTHTVPIYEGFSIPHAVSRIQLAGRDLTTFMAKLLTERGYNFTSSAELEIVRDIKEKLCFVALEYESALKQSHDSSQFEKNYELPDGKVITIGSERFRCPEYLFKPLEMNGRELDSIQDLTYKSIQECDVDVRRDLYQNIIISGGTTMNEGIGERLLKEIENRAPKSINVKVIASADRIFAVWRGGSTRTSLSTFASMWITKEDYDENGASIVHRKCI.

Belongs to the actin family.

Its subcellular location is the cytoplasm. It localises to the cytoskeleton. It catalyses the reaction ATP + H2O = ADP + phosphate + H(+). In terms of biological role, actins are highly conserved proteins that are involved in various types of cell motility and are ubiquitously expressed in all eukaryotic cells. This is Actin, cytoplasmic from Oxytricha trifallax (Sterkiella histriomuscorum).